The primary structure comprises 540 residues: Gamma-cadinene synthase (540 aa).

Residues aspartate 292, aspartate 296, aspartate 436, serine 440, and glutamate 444 each contribute to the Mg(2+) site. The DDXXD motif signature appears at 292–296; it reads DDTYD.

Belongs to the terpene synthase family. Requires Mg(2+) as cofactor. Mn(2+) is required as a cofactor.

It catalyses the reaction (2E,6E)-farnesyl diphosphate = (+)-gamma-cadinene + diphosphate. Its pathway is secondary metabolite biosynthesis; terpenoid biosynthesis. Sesquiterpene synthase that catalyzes the cyclization of trans,trans-farnesyl diphosphate (FPP) to gamma cadinene. This Ocimum basilicum (Sweet basil) protein is Gamma-cadinene synthase (CDS).